A 538-amino-acid polypeptide reads, in one-letter code: Retinoblastoma-binding protein 5 (538 aa).

WD repeat units follow at residues 22-63 (DCIS…KIIS) and 64-103 (AHIH…CDQR). A Glycyl lysine isopeptide (Lys-Gly) (interchain with G-Cter in SUMO2) cross-link involves residue lysine 129. WD repeat units lie at residues 148–188 (DDDS…LVAS), 196–235 (SNTT…TCGR), 249–291 (VNRT…KILH), and 293–331 (TRGE…NWSA). A Phosphothreonine; by CDK1 modification is found at threonine 252. The interval 330 to 366 (SAFAPDFKELDENVEYEERESEFDIEDEDKSEPEQTG) is interaction with ASH2L. Over residues 344 to 360 (EYEERESEFDIEDEDKS) the composition is skewed to acidic residues. Positions 344-377 (EYEERESEFDIEDEDKSEPEQTGADAAEDEEVDV) are disordered. At serine 350 the chain carries Phosphoserine. Residues 371–380 (EDEEVDVTSV) are interaction with WDR5. A phosphoserine mark is found at serine 388 and serine 389. The interval 408–519 (VEDPEENPYG…LPLEGSTKGK (112 aa)) is disordered. The span at 479–490 (SKKKQAGRPKGS) shows a compositional bias: basic residues. Basic and acidic residues predominate over residues 491–510 (KGKEKDSPFKPKLYKGDRGL). Serine 497 carries the post-translational modification Phosphoserine; by CDK1. Serine 525 is subject to Phosphoserine.

Component of the SET1 complex, at least composed of the catalytic subunit (SETD1A or SETD1B), WDR5, WDR82, RBBP5, ASH2L/ASH2, CXXC1/CFP1, HCFC1 and DPY30. Core component of several methyltransferase-containing complexes including MLL1/MLL, MLL2/3 (also named ASCOM complex) and MLL4/WBP7. Each complex is at least composed of ASH2L, RBBP5, WDR5, DPY30, one or more specific histone methyltransferases (KMT2A/MLL1, KMT2D/MLL2, KMT2C/MLL3 and KMT2B/MLL4), and the facultative components PAGR1, BACC1, CHD8, E2F6, HCFC1, HCFC2, HSP70, INO80C, KDM6A, KANSL1, LAS1L, MAX, MCRS1, MEN1, MGA, MYST1/MOF, NCOA6, PAXIP1/PTIP, PELP1, PHF20, PRP31, RING2, RUVB1/TIP49A, RUVB2/TIP49B, SENP3, TAF1, TAF4, TAF6, TAF7, TAF9, TEX10 and alpha- and beta-tubulin. Component of a histone methylation complex composed of at least ZNF335, RBBP5, ASH2L and WDR5; the complex may have histone H3-specific methyltransferase activity, however does not have specificity for 'Lys-4' of histone H3. Interacts with ZNF335. Interacts with ASH2L; the interaction is direct. Interacts with WDR5; the interaction is direct. Components of the ZNF335-RBBP5-ASH2L-WDR5 histone methylation complex may associate with components of a nuclear receptor-mediated transcription complex to form a complex at least composed of ZNF335, HCFC1, CCAR2, EMSY, MKI67, RBBP5, ASH2L and WDR5. Within this complex interacts with EMSY. Found in a complex with RBBP5, ASH2L, DPY30, KMT2A, KMT2D and WDR5. Interacts with SETD1A. Interacts with WDR82.

Its subcellular location is the nucleus. Its function is as follows. In embryonic stem (ES) cells, plays a crucial role in the differentiation potential, particularly along the neural lineage, regulating gene induction and H3 'Lys-4' methylation at key developmental loci, including that mediated by retinoic acid. Does not affect ES cell self-renewal. Component or associated component of some histone methyltransferase complexes which regulates transcription through recruitment of those complexes to gene promoters. As part of the MLL1/MLL complex, involved in mono-, di- and trimethylation at 'Lys-4' of histone H3. Histone H3 'Lys-4' methylation represents a specific tag for epigenetic transcriptional activation. In association with ASH2L and WDR5, stimulates the histone methyltransferase activities of KMT2A, KMT2B, KMT2C, KMT2D, SETD1A and SETD1B. This Mus musculus (Mouse) protein is Retinoblastoma-binding protein 5 (Rbbp5).